A 639-amino-acid chain; its full sequence is MATLSSPTIITTTSILLNNPFLPKTPQLSAHHHRGVRSVNGKVSCQTKNNNGNDENNQFQLIQNPNTNTPYLLDRRNILLGLGGMYAALGSEGANYYNTLAAPILPDVEKCTLSDALWDGSVGDHCCPPPFDLNITKDFEFKNYHNHVKKVRRPAHKAYEDQEWLNDYKRAIAIMKSLPMSDPRSHMQQARVHCAYCDGSYPVLGHNDTRLEVHASWLFPSFHRWYLYFYERILGKLINKPDFALPYWNWDHRDGMRIPEIFKEMDSPLFDPNRNTNHLDKMMNLSFVSDEEGSDVNEDDQYEENILLMRKAMVYPSVSDDPNKAELFLGSPYRAGDKMEGDVSGAGILERMPHNSVHVWTRSNTIKGNQDMGAFWSAGRDPLFYCHHSNVDRMWSLWTDVLHGGNFPKTPEYDDYRNAYFYFYDENANPVRVYVRDSFDTERLGYKYEDQELPWMSITQQQQQQQRQQQRQPLLGGRLKTRTFSLVKKVLTELKVMLPLPLKYSVIKTKVDRPKKSRTKEDKLEHEEVLVINFKLGKSKDFIKFDVYINDGTDYKPEDKTKINLEYAGSFTSLTHGGGGGGGDMSHMAEEDMGKNTVLKLALNQLLEDLDATDDDSIQVTIVPKSGTDSIVITGIDIE.

A chloroplast-targeting transit peptide spans 1 to 101 (MATLSSPTII…EGANYYNTLA (101 aa)). The tract at residues 35–58 (GVRSVNGKVSCQTKNNNGNDENNQ) is disordered. 2 disulfides stabilise this stretch: Cys111-Cys127 and Cys126-Cys194. 6 residues coordinate Cu cation: His193, His214, His223, His354, His358, and His388. Residues 197 to 214 (CDGSYPVLGHNDTRLEVH) constitute a cross-link (2'-(S-cysteinyl)-histidine (Cys-His)).

It belongs to the tyrosinase family. Cu(2+) serves as cofactor.

The protein resides in the plastid. It is found in the chloroplast thylakoid lumen. It carries out the reaction 2 catechol + O2 = 2 1,2-benzoquinone + 2 H2O. Catalyzes the oxidation of mono- and o-diphenols to o-diquinones. The sequence is that of Polyphenol oxidase, chloroplastic from Spinacia oleracea (Spinach).